The chain runs to 335 residues: Nucleoid-associated protein YejK (335 aa).

Belongs to the YejK family.

Its subcellular location is the cytoplasm. The protein resides in the nucleoid. This Salmonella schwarzengrund (strain CVM19633) protein is Nucleoid-associated protein YejK.